The chain runs to 252 residues: Indole-3-glycerol phosphate synthase (252 aa).

This sequence belongs to the TrpC family.

The enzyme catalyses 1-(2-carboxyphenylamino)-1-deoxy-D-ribulose 5-phosphate + H(+) = (1S,2R)-1-C-(indol-3-yl)glycerol 3-phosphate + CO2 + H2O. It participates in amino-acid biosynthesis; L-tryptophan biosynthesis; L-tryptophan from chorismate: step 4/5. This Leptospira interrogans serogroup Icterohaemorrhagiae serovar copenhageni (strain Fiocruz L1-130) protein is Indole-3-glycerol phosphate synthase.